The following is a 137-amino-acid chain: Large ribosomal subunit protein uL16 (137 aa).

Belongs to the universal ribosomal protein uL16 family. As to quaternary structure, part of the 50S ribosomal subunit.

Its function is as follows. Binds 23S rRNA and is also seen to make contacts with the A and possibly P site tRNAs. The protein is Large ribosomal subunit protein uL16 of Streptococcus thermophilus (strain ATCC BAA-491 / LMD-9).